We begin with the raw amino-acid sequence, 453 residues long: Tubulin delta chain (453 aa).

Ala143–Gly149 contributes to the GTP binding site.

It belongs to the tubulin family. As to quaternary structure, found in a complex with TEDC1, TEDC2, TUBE1 and TUBD1.

It localises to the nucleus. The protein localises to the cytoplasm. Its subcellular location is the cytoskeleton. It is found in the microtubule organizing center. The protein resides in the centrosome. It localises to the centriole. The protein localises to the cell projection. Its subcellular location is the cilium. Its function is as follows. Acts as a positive regulator of hedgehog signaling and regulates ciliary function. This is Tubulin delta chain (TUBD1) from Canis lupus familiaris (Dog).